The following is a 479-amino-acid chain: ATP-dependent protease ATPase subunit HslU (479 aa).

ATP is bound by residues Ile32, 74–79 (GVGKTE), Asp290, Glu355, and Arg427.

The protein belongs to the ClpX chaperone family. HslU subfamily. In terms of assembly, a double ring-shaped homohexamer of HslV is capped on each side by a ring-shaped HslU homohexamer. The assembly of the HslU/HslV complex is dependent on binding of ATP.

It localises to the cytoplasm. Its function is as follows. ATPase subunit of a proteasome-like degradation complex; this subunit has chaperone activity. The binding of ATP and its subsequent hydrolysis by HslU are essential for unfolding of protein substrates subsequently hydrolyzed by HslV. HslU recognizes the N-terminal part of its protein substrates and unfolds these before they are guided to HslV for hydrolysis. This Leptospira interrogans serogroup Icterohaemorrhagiae serovar copenhageni (strain Fiocruz L1-130) protein is ATP-dependent protease ATPase subunit HslU.